Here is a 503-residue protein sequence, read N- to C-terminus: Transmembrane prolyl 4-hydroxylase (503 aa).

A disordered region spans residues 1-49; that stretch reads MAAAVATVQRPEAETVEEASNLQWPLPPEHRPSGAATRPGDSEDAPVRP. Residues 1–61 are Cytoplasmic-facing; the sequence is MAAAVATVQR…KPRGICSRAY (61 aa). Residues 62–82 traverse the membrane as a helical; Signal-anchor for type II membrane protein segment; it reads FLVLMVFVHLYLGNVLALLLF. At 83–503 the chain is on the lumenal side; the sequence is VHYSNGDEST…RAYSDARVEL (421 aa). Residues 90-110 are disordered; that stretch reads ESTDPGPQRREQSPQPVPTLG. EF-hand domains lie at 186-221 and 225-260; these read AMQVSQLDLFQLLDQNHDGRLQLREVLAQTRLGNGR and PENIQEMYSAIKADPDGDGVLSLQEFSNMDLRDFHK. 9 residues coordinate Ca(2+): aspartate 199, asparagine 201, aspartate 203, arginine 205, glutamate 210, aspartate 238, aspartate 240, aspartate 242, and glutamate 249. Residues 310–461 enclose the Fe2OG dioxygenase domain; sequence EFSEPLQVVR…KWIANNWINV (152 aa). The Fe cation site is built by histidine 329 and aspartate 331. 2 N-linked (GlcNAc...) asparagine glycosylation sites follow: asparagine 349 and asparagine 369. A Fe cation-binding site is contributed by glutamate 375. A glycan (N-linked (GlcNAc...) asparagine) is linked at asparagine 383. A 2-oxoglutarate-binding site is contributed by lysine 452.

As to quaternary structure, homodimer. Fe(2+) is required as a cofactor. It depends on L-ascorbate as a cofactor. Post-translationally, glycosylated. As to expression, highest expression levels are detected in the eye and brain, especially in the retinal epithelium cells and cortical neurons. Also expressed in skeletal muscle, lung, heart, adrenal gland, kidney, prostate, thyroid and testis.

It is found in the endoplasmic reticulum membrane. It carries out the reaction L-prolyl-[hypoxia-inducible factor alpha subunit] + 2-oxoglutarate + O2 = trans-4-hydroxy-L-prolyl-[hypoxia-inducible factor alpha subunit] + succinate + CO2. In terms of biological role, catalyzes the post-translational formation of 4-hydroxyproline in hypoxia-inducible factor (HIF) alpha proteins. Hydroxylates HIF1A at 'Pro-402' and 'Pro-564'. May function as a cellular oxygen sensor and, under normoxic conditions, may target HIF through the hydroxylation for proteasomal degradation via the von Hippel-Lindau ubiquitination complex. This is Transmembrane prolyl 4-hydroxylase (P4htm) from Mus musculus (Mouse).